The chain runs to 131 residues: Leptin receptor overlapping transcript-like 1 (131 aa).

A run of 4 helical transmembrane segments spans residues 7 to 27 (LISL…GCAL), 32 to 52 (QYWP…YCIA), 69 to 89 (LAIF…VVFA), and 100 to 120 (ALVL…FLVF).

Belongs to the OB-RGRP/VPS55 family. In terms of assembly, interacts with RAB13.

Its subcellular location is the membrane. In terms of biological role, negatively regulates growth hormone (GH) receptor cell surface expression in liver. May play a role in liver resistance to GH during periods of reduced nutrient availability. In Rattus norvegicus (Rat), this protein is Leptin receptor overlapping transcript-like 1 (Leprotl1).